The following is an 833-amino-acid chain: Zinc transporter ZIP10 (833 aa).

A signal peptide spans 1–25 (MKVHIHTKFCLICLLTFIFHHCNHC). A compositionally biased stretch (basic and acidic residues) spans 30–48 (DHGPEELHRHHRGMTESES). 2 disordered regions span residues 30-54 (DHGP…FSVQ) and 137-167 (AENH…IKAD). A compositionally biased stretch (polar residues) spans 137–147 (AENHTTTSVTS). A compositionally biased stretch (basic and acidic residues) spans 152-167 (KCDPEKEAAELPIKAD). Asn191 and Asn198 each carry an N-linked (GlcNAc...) asparagine glycan. Residues 200-209 (SVAHSEHGEP) are compositionally biased toward basic and acidic residues. Disordered regions lie at residues 200–257 (SVAH…NHDH) and 271–335 (RVHS…EDDR). The N-linked (GlcNAc...) asparagine glycan is linked to Asn218. A compositionally biased stretch (basic residues) spans 229-241 (VKVRRKEKGKRKK). Basic and acidic residues-rich tracts occupy residues 281–315 (HLPE…EAPH) and 326–335 (SHKDQSEDDR). Residue Asn341 is glycosylated (N-linked (GlcNAc...) asparagine). Helical transmembrane passes span 413-433 (IISI…VPII) and 440-460 (FLLT…ALLH). Residues 466–485 (QGGHDHSHQHTHGHGHSHGH) form a disordered region. A helical membrane pass occupies residues 497–517 (VLKGLVALGGIYLLFIIEHCI). Thr538 and Thr555 each carry phosphothreonine. The residue at position 593 (Ser593) is a Phosphoserine. A run of 4 helical transmembrane segments spans residues 689–709 (AIGA…IAVF), 734–754 (IVYN…GTAV), 761–781 (ITLW…LVDM), and 803–823 (FILQ…IALY).

Belongs to the ZIP transporter (TC 2.A.5) family. As to quaternary structure, interacts with SLC39A6. This interaction triggers cells to undergo EMT and mitosis. Found in a complex with SLC39A6, SLC39A10 and with the 'Ser-727' phosphorylated form of STAT3 throughout mitosis. Found in a complex with SLC39A6, SLC39A10 and with NCAM1; this complex controls NCAM1 phosphorylation and integration into focal adhesion complexes during epithelial-tomesenchymal transition. Found in a complex with SLC39A6, SLC39A10 and with GSK3B that controls NCAM1 phosphorylation. Post-translationally, undergoes N-terminal ectodomain shedding. Expressed in the liver, kidney and brain.

It is found in the cell membrane. The protein resides in the apical cell membrane. It catalyses the reaction Zn(2+)(in) = Zn(2+)(out). Its function is as follows. Zinc-influx transporter. When associated with SLC39A6, the heterodimer formed by SLC39A10 and SLC39A6 mediates cellular zinc uptake to trigger cells to undergo epithelial-to-mesenchymal transition (EMT). mediates cellular zinc uptake to trigger cells to undergo epithelial-to-mesenchymal transition (EMT). SLC39A10-SLC39A6 heterodimers play also an essentiel role in initiating mitosis by importing zinc into cells to initiate a pathway resulting in the onset of mitosis. Plays an important for both mature B-cell maintenance and humoral immune responses. When associated with SLC39A10, the heterodimer controls NCAM1 phosphorylation and integration into focal adhesion complexes during EMT. The polypeptide is Zinc transporter ZIP10 (Mus musculus (Mouse)).